The chain runs to 481 residues: Long chain base biosynthesis protein 1b (481 aa).

Residues 32-52 (FGIHIDGHLVVEGLLIAAILF) traverse the membrane as a helical segment.

This sequence belongs to the class-II pyridoxal-phosphate-dependent aminotransferase family. As to quaternary structure, heterodimer with LCB2. Component of the serine palmitoyltransferase (SPT) complex, composed of LCB1 and LCB2. The cofactor is pyridoxal 5'-phosphate.

Its subcellular location is the endoplasmic reticulum membrane. The catalysed reaction is L-serine + hexadecanoyl-CoA + H(+) = 3-oxosphinganine + CO2 + CoA. The protein operates within lipid metabolism; sphingolipid metabolism. Functionally, serine palmitoyltransferase (SPT). The heterodimer formed with LCB2 constitutes the catalytic core. This is Long chain base biosynthesis protein 1b from Oryza sativa subsp. japonica (Rice).